The sequence spans 404 residues: S-adenosylmethionine synthase (404 aa).

Histidine 17 contributes to the ATP binding site. Mg(2+) is bound at residue aspartate 19. Glutamate 45 contacts K(+). L-methionine-binding residues include glutamate 58 and glutamine 101. Residues 101 to 111 are flexible loop; sequence QSPDINRGVDR. Residues 172-174, 246-247, aspartate 255, 261-262, alanine 278, and lysine 282 each bind ATP; these read DAK, RF, and RK. Aspartate 255 provides a ligand contact to L-methionine. L-methionine is bound at residue lysine 286.

This sequence belongs to the AdoMet synthase family. As to quaternary structure, homotetramer; dimer of dimers. Requires Mg(2+) as cofactor. The cofactor is K(+).

Its subcellular location is the cytoplasm. The enzyme catalyses L-methionine + ATP + H2O = S-adenosyl-L-methionine + phosphate + diphosphate. The protein operates within amino-acid biosynthesis; S-adenosyl-L-methionine biosynthesis; S-adenosyl-L-methionine from L-methionine: step 1/1. In terms of biological role, catalyzes the formation of S-adenosylmethionine (AdoMet) from methionine and ATP. The overall synthetic reaction is composed of two sequential steps, AdoMet formation and the subsequent tripolyphosphate hydrolysis which occurs prior to release of AdoMet from the enzyme. This chain is S-adenosylmethionine synthase, found in Chlorobaculum tepidum (strain ATCC 49652 / DSM 12025 / NBRC 103806 / TLS) (Chlorobium tepidum).